The primary structure comprises 216 residues: Phosphoribosylaminoimidazole-succinocarboxamide synthase (216 aa).

This sequence belongs to the SAICAR synthetase family.

The catalysed reaction is 5-amino-1-(5-phospho-D-ribosyl)imidazole-4-carboxylate + L-aspartate + ATP = (2S)-2-[5-amino-1-(5-phospho-beta-D-ribosyl)imidazole-4-carboxamido]succinate + ADP + phosphate + 2 H(+). Its pathway is purine metabolism; IMP biosynthesis via de novo pathway; 5-amino-1-(5-phospho-D-ribosyl)imidazole-4-carboxamide from 5-amino-1-(5-phospho-D-ribosyl)imidazole-4-carboxylate: step 1/2. This chain is Phosphoribosylaminoimidazole-succinocarboxamide synthase (purC), found in Aquifex aeolicus (strain VF5).